A 192-amino-acid chain; its full sequence is UPF0316 protein SSP0880 (192 aa).

3 helical membrane-spanning segments follow: residues 8–28 (PWLMVLAIFIINVAYVTCLTM), 40–60 (VAAIVSFLEVLVYVVGLGMVM), and 66–86 (IQNVFAYAFGFSIGIIVGMKI).

The protein belongs to the UPF0316 family.

The protein localises to the cell membrane. This Staphylococcus saprophyticus subsp. saprophyticus (strain ATCC 15305 / DSM 20229 / NCIMB 8711 / NCTC 7292 / S-41) protein is UPF0316 protein SSP0880.